A 217-amino-acid polypeptide reads, in one-letter code: MRVLVVEDEQLLADAVATGLRREAMAVDVVYDGAAALERIGVNDYDVVVLDRDLPLVHGDDVCRKIVELGMPTRVLMLTASGDVSDRVEGLEIGADDYLPKPFAFSELIARVRALGRRTSVPLPPVLERAGIKLDPNRREVFRDGKEVQLAPKEFAVLEVLMRSEGAVVSAEQLLEKAWDENTDPFTNVVRVTVMTLRRKLGEPPVIVTVPGSGYRI.

The region spanning 2–116 (RVLVVEDEQL…ELIARVRALG (115 aa)) is the Response regulatory domain. Asp-51 bears the 4-aspartylphosphate mark. The segment at residues 124 to 217 (PPVLERAGIK…VTVPGSGYRI (94 aa)) is a DNA-binding region (ompR/PhoB-type).

Its function is as follows. Member of the two-component regulatory system CutS/CutR, involved in the regulation of copper metabolism. CutR suppresses a defective melC1 gene, encoding a putative copper-transfer gene, probably by altering copper metabolism. The sequence is that of Transcriptional regulatory protein CutR (cutR) from Streptomyces lividans.